The primary structure comprises 291 residues: G1/S-specific cyclin-D1 (291 aa).

Threonine 282 carries the phosphothreonine modification.

The protein belongs to the cyclin family. Cyclin D subfamily. Interacts with the cdk4 and cdk6 protein kinases to form a serine/threonine kinase holoenzyme complex. The cyclin subunit imparts substrate specificity to the complex. In terms of processing, phosphorylation at Thr-282 by MAP kinases is required for ubiquitination and degradation by the DCX(AMBRA1) complex. Ubiquitinated by the DCX(AMBRA1) complex during the transition from G1 to S cell phase, leading to its degradation. The DCX(AMBRA1) complex represents the major regulator of CCND1 stability during the G1/S transition.

It localises to the nucleus. It is found in the cytoplasm. Regulatory component of the cyclin D1-CDK4 (DC) complex that phosphorylates and inhibits members of the retinoblastoma (RB) protein family including RB1 and regulates the cell-cycle during G(1)/S transition. Phosphorylation of RB1 allows dissociation of the transcription factor E2F from the RB/E2F complex and the subsequent transcription of E2F target genes which are responsible for the progression through the G(1) phase. Hypophosphorylates RB1 in early G(1) phase. Cyclin D-CDK4 complexes are major integrators of various mitogenenic and antimitogenic signals. This is G1/S-specific cyclin-D1 (ccnd1) from Xenopus laevis (African clawed frog).